The primary structure comprises 197 residues: Ribonuclease HII (197 aa).

The RNase H type-2 domain maps to 3 to 192 (QLIAGVDEVG…VQLSLMQRGG (190 aa)). A divalent metal cation contacts are provided by Asp-9, Glu-10, and Asp-101.

This sequence belongs to the RNase HII family. Mn(2+) serves as cofactor. It depends on Mg(2+) as a cofactor.

It localises to the cytoplasm. It carries out the reaction Endonucleolytic cleavage to 5'-phosphomonoester.. Functionally, endonuclease that specifically degrades the RNA of RNA-DNA hybrids. The sequence is that of Ribonuclease HII from Pseudoalteromonas atlantica (strain T6c / ATCC BAA-1087).